The chain runs to 182 residues: ATP synthase subunit delta (182 aa).

The protein belongs to the ATPase delta chain family. F-type ATPases have 2 components, F(1) - the catalytic core - and F(0) - the membrane proton channel. F(1) has five subunits: alpha(3), beta(3), gamma(1), delta(1), epsilon(1). CF(0) has four main subunits: a(1), b(1), b'(1) and c(10-14). The alpha and beta chains form an alternating ring which encloses part of the gamma chain. F(1) is attached to F(0) by a central stalk formed by the gamma and epsilon chains, while a peripheral stalk is formed by the delta, b and b' chains.

Its subcellular location is the cellular thylakoid membrane. In terms of biological role, f(1)F(0) ATP synthase produces ATP from ADP in the presence of a proton or sodium gradient. F-type ATPases consist of two structural domains, F(1) containing the extramembraneous catalytic core and F(0) containing the membrane proton channel, linked together by a central stalk and a peripheral stalk. During catalysis, ATP synthesis in the catalytic domain of F(1) is coupled via a rotary mechanism of the central stalk subunits to proton translocation. This protein is part of the stalk that links CF(0) to CF(1). It either transmits conformational changes from CF(0) to CF(1) or is implicated in proton conduction. The chain is ATP synthase subunit delta from Prochlorococcus marinus (strain NATL1A).